The sequence spans 436 residues: MKGTAASALLIALSATAAQARPVVDERFPYTGPAVPIGDWVDPTINGNGKGFPRLVEPPAVKPATANPRNNVNVISLSYIPKGMHIHYQTPFGLGQLPAVRWGKDPRNLKQHGAGLLSHFQDWSSGRSPGIVQRRRAERHGLHQRSRNTQAAGQGCPMRELPFAWPTEVTISYADELGIILVPTTGRSATTAPVLLFRVAYSGRVQEALARGEIPDQGEVVANRRRNFTAYQHPFRMPGPETGGVGNFWYSFDYGLAHFVSIDGETDFANSPEWNFAEDVTGNETLPSEAETFITDSGPFGNVNGSVHETKSYEQWHLAEAGSGEGRPQQDPVGLRHEPPPYVQFRLFLYQLHVREAFEGLLLSMAWMLTSLGDVCPFFKLVHHPLTLSSATSTGTSSLSSRATAPSILPPCEQQHLLCPQRQVHHPHHQRHGRQH.

The signal sequence occupies residues 1–20 (MKGTAASALLIALSATAAQA). N-linked (GlcNAc...) asparagine glycans are attached at residues N227, N283, and N304.

Monomer.

It catalyses the reaction a phosphate monoester + H2O = an alcohol + phosphate. This Aspergillus niger protein is Phosphate-repressible acid phosphatase (pacA).